The sequence spans 437 residues: Transcription factor ets-4 (437 aa).

Residues 1-30 (MNGTGSVGHRWNSLSPEPHSGTESTASTPF) are disordered. A compositionally biased stretch (polar residues) spans 21–30 (GTESTASTPF). Residue Lys32 forms a Glycyl lysine isopeptide (Lys-Gly) (interchain with G-Cter in SUMO) linkage. Ser73 carries the post-translational modification Phosphoserine. A Glycyl lysine isopeptide (Lys-Gly) (interchain with G-Cter in SUMO) cross-link involves residue Lys83. A PNT domain is found at 120–202 (HLIQDISTTC…AQLQVWKTGT (83 aa)). Positions 275 to 302 (QGTVLPSPSNSDTSSNGSSQDMNDDDID) are disordered. Residues 280–293 (PSPSNSDTSSNGSS) are compositionally biased toward low complexity. A DNA-binding region (ETS) is located at residues 349–432 (VHLWQFIREL…KKQRLVYKFL (84 aa)).

This sequence belongs to the ETS family. May interact with cebp-1. May interact with tdpt-1 to facilitate its sumoylation. Phosphorylation is required for axon regeneration. In terms of processing, sumoylated; sumoylation inhibits phosphorylation, which is required for probable interaction with cebp-1 and consequently the expression of svh-2. In terms of tissue distribution, expressed in cells of the anterior and posterior bulbs of the pharynx, seam cells, a few unidentified cells of the vulva, the hypodermis, several unidentified neurons, labial socket cells of the head and rectal cells.

The protein resides in the nucleus. Functionally, transcription factor which binds to 5'-GGAA/T-3' DNA consensus sequences. Both positively and negatively regulates the expression of target genes. Plays a role in the regulation of adult lifespan, which may in part be through modulation of daf-16 activity. Regulates the expression of genes such as svh-2 in response to axon injury and in addition, may function downstream of the cAMP signaling pathway to promote axon regeneration. Regulates the expression of lipid metabolism genes and may also control the expression of the RNA-binding protein rege-1 which too has been implicated in the control of fat accumulation. The chain is Transcription factor ets-4 from Caenorhabditis elegans.